A 399-amino-acid chain; its full sequence is Glutathione S-transferase LANCL1 (399 aa).

Position 2 is an N-acetylalanine (Ala2). Lys142 is subject to N6-acetyllysine. Cys276 is a Zn(2+) binding site. Lys317 serves as a coordination point for glutathione. Zn(2+) contacts are provided by Cys322 and His323. Glutathione is bound at residue 364-367; that stretch reads RTPD.

The protein belongs to the LanC-like protein family. In terms of assembly, interacts with the C-terminal of STOM. Interacts with the EPS8 SH3 domain. Interaction with EPS8 is inhibited by glutathione binding. As to expression, strongly expressed in the brain, testis and skeletal muscle. Expressed in the neurons of the cerebellum, the germinal cells of the seminiferous tubules in testis, in liver hepoatocytes and in cardiac myocytes.

Its subcellular location is the cytoplasm. It is found in the cell membrane. It catalyses the reaction RX + glutathione = an S-substituted glutathione + a halide anion + H(+). The catalysed reaction is 1-chloro-2,4-dinitrobenzene + glutathione = 2,4-dinitrophenyl-S-glutathione + chloride + H(+). Functions as a glutathione transferase. Catalyzes conjugation of the glutathione (GSH) to artificial substrates 1-chloro-2,4-dinitrobenzene (CDNB) and p-nitrophenyl acetate. Mitigates neuronal oxidative stress during normal postnatal development and in response to oxidative stresses probably through GSH antioxidant defense mechanism. May play a role in EPS8 signaling. Binds glutathione. This chain is Glutathione S-transferase LANCL1, found in Rattus norvegicus (Rat).